We begin with the raw amino-acid sequence, 95 residues long: Small ribosomal subunit protein uS19 (95 aa).

The interval 73 to 95 is disordered; sequence EFSPTRTYRGHGADKNAKGSKKK.

This sequence belongs to the universal ribosomal protein uS19 family.

Its function is as follows. Protein S19 forms a complex with S13 that binds strongly to the 16S ribosomal RNA. The sequence is that of Small ribosomal subunit protein uS19 from Deinococcus radiodurans (strain ATCC 13939 / DSM 20539 / JCM 16871 / CCUG 27074 / LMG 4051 / NBRC 15346 / NCIMB 9279 / VKM B-1422 / R1).